We begin with the raw amino-acid sequence, 368 residues long: Meiotic driver wtf23 (368 aa).

Residues 1–98 are disordered; that stretch reads MKNKYYPLRS…SSGTADNSST (98 aa). Positions 11-29 are enriched in basic and acidic residues; that stretch reads SMDELSAKNDNEIDLEKGP. 2 stretches are compositionally biased toward polar residues: residues 57–72 and 89–98; these read GANN…STTP and SSGTADNSST. A run of 7 helical transmembrane segments spans residues 105 to 124, 139 to 158, 170 to 192, 202 to 221, 234 to 256, 266 to 283, and 328 to 350; these read FLSF…YLTY, YFGV…WYFY, IFLA…VISI, MIII…GCVK, STCT…FWTF, VFLL…TMFL, and GIAF…FRGG.

This sequence belongs to the WTF family. In terms of assembly, homomer. Forms protein aggregates. The two isoforms can interact with each other and with themselves. High sequence similarity is required for their interaction.

It localises to the spore membrane. Its subcellular location is the vacuole membrane. The protein localises to the ascus epiplasm. It is found in the cytoplasm. The protein resides in the endoplasmic reticulum membrane. Functionally, promotes unequal transmission of alleles from the parental zygote to progeny spores by acting as poison/antidote system where the poison and antidote proteins are produced from the same locus; the poison component is trans-acting and targets all spores within an ascus whereas the antidote component is spore-specific, leading to poisoning of all progeny that do not inherit the allele. In terms of biological role, localizes isoform 2 to the vacuole thereby facilitating its degradation. Forms toxic aggregates that disrupt spore maturation. The chain is Meiotic driver wtf23 from Schizosaccharomyces pombe (strain 972 / ATCC 24843) (Fission yeast).